The sequence spans 290 residues: Acetyl-coenzyme A carboxylase carboxyl transferase subunit beta (290 aa).

The CoA carboxyltransferase N-terminal domain maps to Val-28–Asn-290. Positions 32, 35, 51, and 54 each coordinate Zn(2+). Residues Cys-32–Cys-54 form a C4-type zinc finger.

It belongs to the AccD/PCCB family. As to quaternary structure, acetyl-CoA carboxylase is a heterohexamer composed of biotin carboxyl carrier protein (AccB), biotin carboxylase (AccC) and two subunits each of ACCase subunit alpha (AccA) and ACCase subunit beta (AccD). It depends on Zn(2+) as a cofactor.

The protein localises to the cytoplasm. The enzyme catalyses N(6)-carboxybiotinyl-L-lysyl-[protein] + acetyl-CoA = N(6)-biotinyl-L-lysyl-[protein] + malonyl-CoA. The protein operates within lipid metabolism; malonyl-CoA biosynthesis; malonyl-CoA from acetyl-CoA: step 1/1. Functionally, component of the acetyl coenzyme A carboxylase (ACC) complex. Biotin carboxylase (BC) catalyzes the carboxylation of biotin on its carrier protein (BCCP) and then the CO(2) group is transferred by the transcarboxylase to acetyl-CoA to form malonyl-CoA. The protein is Acetyl-coenzyme A carboxylase carboxyl transferase subunit beta of Geobacillus kaustophilus (strain HTA426).